The primary structure comprises 574 residues: Cytochrome P450 306a1 (574 aa).

Positions 303 to 314 (EKEQLRQSKEAD) are enriched in basic and acidic residues. The segment at 303–333 (EKEQLRQSKEADPSQEQSEADEDDEESDEED) is disordered. A compositionally biased stretch (acidic residues) spans 320 to 333 (SEADEDDEESDEED). Cys-505 contributes to the heme binding site.

The protein belongs to the cytochrome P450 family. The cofactor is heme. In terms of tissue distribution, first seen at the early (syncytial) blastoderm stage 4. During cellularization of the blastoderm (stage 5), stripes of expression appear and remain through to stage 10. Expression becomes undetectable during germ band retraction (stages 11-14). By stage 15, some expression resumes in the primordium of the ring gland, so that by stage 17 strong expression is seen, but only in the ring gland. This specific localization continues throughout the larval instars (at protein level). Expressed in the prothoracic gland cells of the larval ring gland (RG). Levels decline just after the molt to the third instar then increase later during the wandering stage. Low levels of expression are seen in the larval brain and fat body. In the adult, majority of expression is restricted to the ovaries, with low levels in the head and carcass of both sexes.

It is found in the endoplasmic reticulum membrane. The protein resides in the microsome membrane. The catalysed reaction is 2,22,25-trideoxyecdysone + 2 reduced [adrenodoxin] + O2 + 2 H(+) = 2,22-dideoxyecdysone + 2 oxidized [adrenodoxin] + H2O. The protein operates within steroid biosynthesis; ecdysteroid biosynthesis. Involved in the metabolism of insect hormones; responsible for ecdysteroid C25-hydroxylase activity. May be involved in the breakdown of synthetic insecticides. This chain is Cytochrome P450 306a1, found in Drosophila melanogaster (Fruit fly).